Reading from the N-terminus, the 415-residue chain is Gamma-glutamyl phosphate reductase (415 aa).

It belongs to the gamma-glutamyl phosphate reductase family.

It is found in the cytoplasm. The catalysed reaction is L-glutamate 5-semialdehyde + phosphate + NADP(+) = L-glutamyl 5-phosphate + NADPH + H(+). It participates in amino-acid biosynthesis; L-proline biosynthesis; L-glutamate 5-semialdehyde from L-glutamate: step 2/2. Its function is as follows. Catalyzes the NADPH-dependent reduction of L-glutamate 5-phosphate into L-glutamate 5-semialdehyde and phosphate. The product spontaneously undergoes cyclization to form 1-pyrroline-5-carboxylate. This chain is Gamma-glutamyl phosphate reductase, found in Bacillus thuringiensis subsp. konkukian (strain 97-27).